A 579-amino-acid polypeptide reads, in one-letter code: Thiol:disulfide interchange protein DsbD (579 aa).

The N-terminal stretch at Met1–Ala16 is a signal peptide. Cystine bridges form between Cys124–Cys129 and Cys193–Cys315. 8 helical membrane-spanning segments follow: residues Ile178–Leu198, Leu230–Leu250, Tyr254–Phe274, Gly296–Thr316, Ala337–Phe357, Phe376–Trp396, Glu397–Ser417, and Gly420–Leu440. Residues Thr449–His579 enclose the Thioredoxin domain. Cys495 and Cys498 are joined by a disulfide.

It belongs to the thioredoxin family. DsbD subfamily.

It is found in the cell inner membrane. It catalyses the reaction [protein]-dithiol + NAD(+) = [protein]-disulfide + NADH + H(+). It carries out the reaction [protein]-dithiol + NADP(+) = [protein]-disulfide + NADPH + H(+). In terms of biological role, required to facilitate the formation of correct disulfide bonds in some periplasmic proteins and for the assembly of the periplasmic c-type cytochromes. Acts by transferring electrons from cytoplasmic thioredoxin to the periplasm. This transfer involves a cascade of disulfide bond formation and reduction steps. This Haemophilus influenzae (strain PittEE) protein is Thiol:disulfide interchange protein DsbD.